The following is a 415-amino-acid chain: WD repeat-containing protein JIP5 (415 aa).

WD repeat units lie at residues 5 to 44, 104 to 142, 145 to 184, 189 to 228, and 233 to 282; these read DVGSQIFDVVFHPTFATVYTGLLNGHVKAFAYNEQGKEQA, AHDSTINRVKYLMPWLISTGDDDGVIKLWDPRQQECVRE, QHFDYITDFLWLDDKKQLVATSGDGTLSVMDVRSKKPEPF, DQDDELLSIVAIKGHSKIVVGTQLGILSIFNRSKGWGDCV, and GHPL…VVAD. The tract at residues 328-415 is disordered; sequence GALGVTNENE…DVENAFFDEL (88 aa). Acidic residues predominate over residues 337–346; the sequence is EQSDEDEEMD. Residues 358 to 367 show a composition bias toward low complexity; that stretch reads DGSGSSSSGE. The segment covering 390–405 has biased composition (basic and acidic residues); it reads EQKPLDVDKPKGRNEI.

The protein belongs to the WD repeat WDR55 family.

It is found in the nucleus. Its subcellular location is the nucleolus. This Laccaria bicolor (strain S238N-H82 / ATCC MYA-4686) (Bicoloured deceiver) protein is WD repeat-containing protein JIP5 (JIP5).